A 156-amino-acid polypeptide reads, in one-letter code: Cell division protein SepF (156 aa).

A disordered region spans residues 17–44 (PETADYYEDQQPAQQAPAPVPTPAPTRS).

Belongs to the SepF family. In terms of assembly, homodimer. Interacts with FtsZ.

It localises to the cytoplasm. Its function is as follows. Cell division protein that is part of the divisome complex and is recruited early to the Z-ring. Probably stimulates Z-ring formation, perhaps through the cross-linking of FtsZ protofilaments. Its function overlaps with FtsA. The sequence is that of Cell division protein SepF from Limosilactobacillus fermentum (strain NBRC 3956 / LMG 18251) (Lactobacillus fermentum).